The following is a 251-amino-acid chain: UstYa family oxidase phomYb (251 aa).

The interval 1–47 (MDGYSSKKPRSASPSRSSLTEVEEEERDTLLKTVSLEEEDKSGENGP) is disordered. A helical transmembrane segment spans residues 58–78 (AIGILMLSNIAFIAAFLTVFV). Residue asparagine 135 is glycosylated (N-linked (GlcNAc...) asparagine). 2 consecutive short sequence motifs (HXXHC) follow at residues 160-164 (HQLHC) and 187-191 (HVSHC).

It belongs to the ustYa family.

It is found in the membrane. It participates in mycotoxin biosynthesis. Functionally, ustYa family oxidase; part of the gene cluster that mediates the biosynthesis of the phomopsins, a group of hexapeptide mycotoxins which infects lupins and causes lupinosis disease in livestock. Within the pathway, phomYb is probably involved in the construction of the macrocyclic structure of the phomopsins. The pathway starts with the processing of the precursor phomA by several endopeptidases including kexin proteases as well as the cluster-specific S41 family peptidase phomP1 and the oligopeptidase phomG to produce 10 identical copies of the hexapeptide Tyr-Val-Ile-Pro-Ile-Asp. After being excised from the precursor peptide, the core peptides are cyclized and modified post-translationally by enzymes encoded within the gene cluster. The timing and order of proteolysis of the phomA precursor and PTMs are still unknown. Two tyrosinase-like enzymes, phomQ1 and phomQ2, catalyze the chlorination and hydroxylation of Tyr, respectively. PhomYb, is proposed to be involved in the construction of the macrocyclic structure. The other 4 ustYa family proteins may be involved in PTMs that generate the unique structure of phomopsin A. PhomYa is required for the hydroxylation of C-beta of Tyr. PhomYc, phomYd, and phomYe are responsible for the biosynthesis of 2,3-dehydroisoleucine (dIle), 2,3-dehydroaspartic acid (dAsp), and 3,4-dehydroproline (dPro), respectively. While dIle formation by phomYc is indispensable for the installation of dAsp by phomYd, the order of the other PTMs have not been elucidated yet. Most of the biosynthetic enzymes likely have broad substrate specificity, and thus, there might be a metabolic grid from a precursor to phomopsin A. The enzyme(s) responsible for the biosynthesis of 3,4-dehydrovaline (dVal) have also not been identified yet. Finally, phomM acts as an S-adenosylmethionine-dependent alpha-N-methyltransferase that catalyzes two successive N-methylation reactions, converting N-desmethyl-phomopsin A to phomopsin A and phomopsin A further to an N,N-dimethylated congener called phomopsin E. The sequence is that of UstYa family oxidase phomYb from Diaporthe leptostromiformis (Lupinosis disease fungus).